The sequence spans 396 residues: NADH-quinone oxidoreductase subunit D 1 (396 aa).

The protein belongs to the complex I 49 kDa subunit family. In terms of assembly, NDH-1 is composed of 14 different subunits. Subunits NuoB, C, D, E, F, and G constitute the peripheral sector of the complex.

It localises to the cell inner membrane. The catalysed reaction is a quinone + NADH + 5 H(+)(in) = a quinol + NAD(+) + 4 H(+)(out). In terms of biological role, NDH-1 shuttles electrons from NADH, via FMN and iron-sulfur (Fe-S) centers, to quinones in the respiratory chain. The immediate electron acceptor for the enzyme in this species is believed to be ubiquinone. Couples the redox reaction to proton translocation (for every two electrons transferred, four hydrogen ions are translocated across the cytoplasmic membrane), and thus conserves the redox energy in a proton gradient. In Nitrobacter hamburgensis (strain DSM 10229 / NCIMB 13809 / X14), this protein is NADH-quinone oxidoreductase subunit D 1.